The primary structure comprises 281 residues: Hexaprenyl pyrophosphate synthase (281 aa).

Residues Lys-42, Arg-45, and His-74 each coordinate isopentenyl diphosphate. Mg(2+)-binding residues include Asp-81 and Asp-85. Arg-91 is a binding site for isopentenyl diphosphate.

Belongs to the FPP/GGPP synthase family. In terms of assembly, homodimer. Requires Mg(2+) as cofactor.

It carries out the reaction 2 isopentenyl diphosphate + (2E,6E,10E)-geranylgeranyl diphosphate = all-trans-hexaprenyl diphosphate + 2 diphosphate. Functionally, catalyzes consecutive E-type condensation of two isopentenyl pyrophosphate (IPP) molecules with an allylic substrate such as geranylgeranyl diphosphate (GGPP), farnesyl diphosphate (FPP) or geranyl diphosphate (GPP) to yield the medium-chain product trans-C30-hexaprenyl pyrophosphate (HexPP). GGPP is the physiological substrate. The polypeptide is Hexaprenyl pyrophosphate synthase (gdS-2) (Saccharolobus solfataricus (strain ATCC 35092 / DSM 1617 / JCM 11322 / P2) (Sulfolobus solfataricus)).